Here is a 210-residue protein sequence, read N- to C-terminus: Ribonuclease HII (210 aa).

The RNase H type-2 domain occupies 18–210; that stretch reads GLIAGVDEVG…FKPVKALLGL (193 aa). Residues D24, E25, and D116 each contribute to the a divalent metal cation site.

This sequence belongs to the RNase HII family. The cofactor is Mn(2+). It depends on Mg(2+) as a cofactor.

Its subcellular location is the cytoplasm. It catalyses the reaction Endonucleolytic cleavage to 5'-phosphomonoester.. In terms of biological role, endonuclease that specifically degrades the RNA of RNA-DNA hybrids. This is Ribonuclease HII from Shewanella baltica (strain OS155 / ATCC BAA-1091).